The following is a 70-amino-acid chain: Putative membrane protein insertion efficiency factor (70 aa).

The protein belongs to the UPF0161 family.

It is found in the cell inner membrane. Its function is as follows. Could be involved in insertion of integral membrane proteins into the membrane. The chain is Putative membrane protein insertion efficiency factor from Methylobacillus flagellatus (strain ATCC 51484 / DSM 6875 / VKM B-1610 / KT).